A 502-amino-acid polypeptide reads, in one-letter code: Beta-amyrin 28-monooxygenase CYP716A379 (502 aa).

A helical; Signal-anchor for type II membrane protein transmembrane segment spans residues 3-23 (LITLLSALLVLAIVSLSTFFV). Residues N88 and N181 are each glycosylated (N-linked (GlcNAc...) asparagine). Heme is bound at residue C444.

It belongs to the cytochrome P450 family. The cofactor is heme. Mainly expressed in flowers and flower buds, to a lesser extent in young leaves and, at low levels, in old leaves, stems and roots.

It is found in the membrane. It catalyses the reaction beta-amyrin + 3 reduced [NADPH--hemoprotein reductase] + 3 O2 = oleanolate + 3 oxidized [NADPH--hemoprotein reductase] + 4 H2O + 4 H(+). Its pathway is secondary metabolite biosynthesis; terpenoid biosynthesis. In terms of biological role, component of the oleanane-type triterpene saponins (e.g. saponarioside A and saponarioside B) biosynthetic pathway, leading to the production of natural products with detergent properties used as traditional sources of soap. An oxidoreductase that facilitates the oxidation of the methyl group to a carboxyl group at the C-28 position of beta-amyrin, resulting in the formation of oleanolic acid. Catalyzes also the subsequent oxidation of the methyl group to a&lt; carboxyl group at the C-16 alpha position of oleanolic acid, resulting in the formation of echinocystic acid. This is Beta-amyrin 28-monooxygenase CYP716A379 from Saponaria officinalis (Common soapwort).